Consider the following 107-residue polypeptide: Sulfurtransferase Alvin_2599 (107 aa).

Residues 16–104 enclose the Rhodanese domain; sequence DTEDVLLVDI…WARHGLPIVA (89 aa). Residue Cys-64 is the Cysteine persulfide intermediate of the active site.

In terms of assembly, monomer.

It localises to the cytoplasm. It participates in energy metabolism; sulfur metabolism. In terms of biological role, sulfur carrier protein involved in sulfur trafficking for oxidative dissimilatory sulfur metabolism. Component of a sulfur relay system that starts with the sulfur-mobilizing rhodanese-like protein Rhd_2599 (Alvin_2599), which transfers the sulfur from a low-molecular-weight thiol, maybe glutathione, to the TusA protein (Alvin_2600); TusA serves as the sulfur donor for DsrEFH, which persulfurates DsrC; persulfurated DsrC very probably serves as a direct substrate for reverse-acting sulfite reductase, DsrAB. Is able to catalyze the sulfur transfer reaction from thiosulfate or glutathione (GSSH) to cyanide in vitro, however, thiosulfate is unlikely an in vivo substrate. The sequence is that of Sulfurtransferase Alvin_2599 from Allochromatium vinosum (strain ATCC 17899 / DSM 180 / NBRC 103801 / NCIMB 10441 / D) (Chromatium vinosum).